We begin with the raw amino-acid sequence, 288 residues long: Elongation factor Ts (288 aa).

Residues 82-85 are involved in Mg(2+) ion dislocation from EF-Tu; it reads TDFV.

This sequence belongs to the EF-Ts family.

Its subcellular location is the cytoplasm. In terms of biological role, associates with the EF-Tu.GDP complex and induces the exchange of GDP to GTP. It remains bound to the aminoacyl-tRNA.EF-Tu.GTP complex up to the GTP hydrolysis stage on the ribosome. The sequence is that of Elongation factor Ts from Chlorobaculum parvum (strain DSM 263 / NCIMB 8327) (Chlorobium vibrioforme subsp. thiosulfatophilum).